Here is a 217-residue protein sequence, read N- to C-terminus: Peptide methionine sulfoxide reductase MsrA (217 aa).

Cys-56 is an active-site residue.

The protein belongs to the MsrA Met sulfoxide reductase family.

It catalyses the reaction L-methionyl-[protein] + [thioredoxin]-disulfide + H2O = L-methionyl-(S)-S-oxide-[protein] + [thioredoxin]-dithiol. The enzyme catalyses [thioredoxin]-disulfide + L-methionine + H2O = L-methionine (S)-S-oxide + [thioredoxin]-dithiol. Functionally, has an important function as a repair enzyme for proteins that have been inactivated by oxidation. Catalyzes the reversible oxidation-reduction of methionine sulfoxide in proteins to methionine. The sequence is that of Peptide methionine sulfoxide reductase MsrA from Corynebacterium melassecola.